Here is a 351-residue protein sequence, read N- to C-terminus: Protein Wnt-4 (351 aa).

The signal sequence occupies residues 1 to 22 (MSPRSCLRSLRLLVFAVFSAAA). 11 disulfide bridges follow: Cys78–Cys89, Cys128–Cys136, Cys138–Cys155, Cys206–Cys220, Cys208–Cys215, Cys280–Cys311, Cys296–Cys306, Cys310–Cys350, Cys326–Cys341, Cys328–Cys338, and Cys333–Cys334. Asn88 carries an N-linked (GlcNAc...) asparagine glycan. Residue Ser212 is the site of O-palmitoleoyl serine; by PORCN attachment. Asn297 is a glycosylation site (N-linked (GlcNAc...) asparagine).

It belongs to the Wnt family. As to quaternary structure, interacts with PORCN. Interacts with PKD1. Palmitoleoylation is required for efficient binding to frizzled receptors. Depalmitoleoylation leads to Wnt signaling pathway inhibition. In terms of tissue distribution, in adults in lung and brain.

The protein localises to the secreted. It localises to the extracellular space. It is found in the extracellular matrix. In terms of biological role, ligand for members of the frizzled family of seven transmembrane receptors. Plays an important role in the embryonic development of the urogenital tract and the lung. Required for normal mesenchyme to epithelium transition during embryonic kidney development. Required for the formation of early epithelial renal vesicles during kidney development. Required for normal formation of the Mullerian duct in females, and normal levels of oocytes in the ovaries. Required for normal down-regulation of 3 beta-hydroxysteroid dehydrogenase in the ovary. Required for normal lung development and for normal patterning of trachael cartilage rings. The chain is Protein Wnt-4 (Wnt4) from Mus musculus (Mouse).